The following is a 73-amino-acid chain: Stigmurin (73 aa).

Residues Met1–Ala22 form the signal peptide. Lys39 carries the post-translational modification Lysine amide. The propeptide occupies Glu45–Tyr73.

Belongs to the non-disulfide-bridged peptide (NDBP) superfamily. Short antimicrobial peptide (group 4) family. As to expression, expressed by the venom gland.

The protein localises to the secreted. Functionally, antimicrobial peptide with activity against Gram-positive bacterial strains (S.aureus (MIC=2-140 uM), methicillin-resistant S.aureus (MRSA) (MIC=8-17 uM), S.epidermidis (MIC=1.17 uM), and the yeasts C.albicans, C.krusei, and C.glabrata (MIC=34-69 uM)). Acts by disrupting the cell membrane (observed on outer layer of the S.aureus). Is not active against Gram-negative bacteria (E.coli, E.Cloacae, P.aeruginosa), and the Gram-positive bacterium E.faecalis. Also shows toxicity against several cell lines, but possess low hemolytic activity at the highest concentration tested. Also shows antiparasitic activity against Trypanosoma cruzi by decreasing the viability of the epimastigote and trypomastigote forms of the parasite. Displays high hydroxyl radical scavenging activity (antioxidant action). In a wound infection model, the topical application of this peptide demonstrates antibacterial effects, as well as an ability to accelerate wound closure speed, which suggests the induction of tissue repair. In the model of polymicrobial sepsis, it exhibits an antibiotic effect, reducing the levels of microorganisms in the infectious focus and the inflammatory responses in the lung and cecum of septic animals. This chain is Stigmurin, found in Tityus stigmurus (Brazilian scorpion).